Consider the following 229-residue polypeptide: Cytochrome c oxidase subunit 2 (229 aa).

The Mitochondrial intermembrane portion of the chain corresponds to 1 to 26 (MANWTQLGLQDASSPLMEELIYFHDY). The chain crosses the membrane as a helical span at residues 27–48 (TLIILTLITILVFYGLASLLFS). Residues 49-62 (SNTNRFFLEGQGLE) are Mitochondrial matrix-facing. A helical membrane pass occupies residues 63 to 82 (TVWTIIPAVILIFIALPSLQ). At 83–229 (LLYLMDEVNN…ETWVSNFITE (147 aa)) the chain is on the mitochondrial intermembrane side. Residues His161, Cys196, Glu198, Cys200, His204, and Met207 each coordinate Cu cation. Glu198 is a Mg(2+) binding site.

Belongs to the cytochrome c oxidase subunit 2 family. In terms of assembly, component of the cytochrome c oxidase (complex IV, CIV), a multisubunit enzyme composed of a catalytic core of 3 subunits and several supernumerary subunits. The complex exists as a monomer or a dimer and forms supercomplexes (SCs) in the inner mitochondrial membrane with ubiquinol-cytochrome c oxidoreductase (cytochrome b-c1 complex, complex III, CIII). The cofactor is Cu cation.

The protein resides in the mitochondrion inner membrane. It carries out the reaction 4 Fe(II)-[cytochrome c] + O2 + 8 H(+)(in) = 4 Fe(III)-[cytochrome c] + 2 H2O + 4 H(+)(out). Its function is as follows. Component of the cytochrome c oxidase, the last enzyme in the mitochondrial electron transport chain which drives oxidative phosphorylation. The respiratory chain contains 3 multisubunit complexes succinate dehydrogenase (complex II, CII), ubiquinol-cytochrome c oxidoreductase (cytochrome b-c1 complex, complex III, CIII) and cytochrome c oxidase (complex IV, CIV), that cooperate to transfer electrons derived from NADH and succinate to molecular oxygen, creating an electrochemical gradient over the inner membrane that drives transmembrane transport and the ATP synthase. Cytochrome c oxidase is the component of the respiratory chain that catalyzes the reduction of oxygen to water. Electrons originating from reduced cytochrome c in the intermembrane space (IMS) are transferred via the dinuclear copper A center (CU(A)) of subunit 2 and heme A of subunit 1 to the active site in subunit 1, a binuclear center (BNC) formed by heme A3 and copper B (CU(B)). The BNC reduces molecular oxygen to 2 water molecules using 4 electrons from cytochrome c in the IMS and 4 protons from the mitochondrial matrix. This chain is Cytochrome c oxidase subunit 2 (COII), found in Patiria pectinifera (Starfish).